Reading from the N-terminus, the 321-residue chain is Olfactory receptor 51G1 (321 aa).

The Extracellular portion of the chain corresponds to 1–27; sequence MTILLNSSLQRATFFLTGFQGLEGLHG. The N-linked (GlcNAc...) asparagine glycan is linked to Asn-6. A helical transmembrane segment spans residues 28–48; that stretch reads WISIPFCFIYLTVILGNLTIL. The Cytoplasmic segment spans residues 49-56; it reads HVICTDAT. The helical transmembrane segment at 57 to 77 threads the bilayer; the sequence is LHGPMYYFLGMLAVTDLGLCL. Topologically, residues 78–101 are extracellular; sequence STLPTVLGIFWFDTREIGIPACFT. A disulfide bridge links Cys-99 with Cys-191. Residues 102–122 traverse the membrane as a helical segment; sequence QLFFIHTLSSMESSVLLSMSI. Residues 123-141 are Cytoplasmic-facing; that stretch reads DRYVAVCNPLHDSTVLTPA. The helical transmembrane segment at 142 to 162 threads the bilayer; sequence CIVKMGLSSVLRSALLILPLP. Residues 163–198 lie on the Extracellular side of the membrane; sequence FLLKRFQYCHSHVLAHAYCLHLEIMKLACSSIIVNH. Residues 199-219 traverse the membrane as a helical segment; sequence IYGLFVVACTVGVDSLLIFLS. Topologically, residues 220 to 239 are cytoplasmic; the sequence is YALILRTVLSIASHQERLRA. Residues 240–260 form a helical membrane-spanning segment; the sequence is LNTCVSHICAVLLFYIPMIGL. The Extracellular segment spans residues 261–275; it reads SLVHRFGEHLPRVVH. The helical transmembrane segment at 276 to 296 threads the bilayer; that stretch reads LFMSYVYLLVPPLMNPIIYSI. Residues 297-321 are Cytoplasmic-facing; sequence KTKQIRQRIIKKFQFIKSLRCFWKD.

The protein belongs to the G-protein coupled receptor 1 family.

Its subcellular location is the cell membrane. Odorant receptor. This is Olfactory receptor 51G1 (OR51G1) from Homo sapiens (Human).